The following is a 233-amino-acid chain: Protein-L-isoaspartate O-methyltransferase (233 aa).

Residue S83 is part of the active site.

It belongs to the methyltransferase superfamily. L-isoaspartyl/D-aspartyl protein methyltransferase family.

Its subcellular location is the cytoplasm. The catalysed reaction is [protein]-L-isoaspartate + S-adenosyl-L-methionine = [protein]-L-isoaspartate alpha-methyl ester + S-adenosyl-L-homocysteine. Functionally, catalyzes the methyl esterification of L-isoaspartyl residues in peptides and proteins that result from spontaneous decomposition of normal L-aspartyl and L-asparaginyl residues. It plays a role in the repair and/or degradation of damaged proteins. The chain is Protein-L-isoaspartate O-methyltransferase from Opitutus terrae (strain DSM 11246 / JCM 15787 / PB90-1).